The chain runs to 212 residues: External core antigen (212 aa).

Positions 1–19 (MQLFPLCLIISCSCPTVQA) are cleaved as a signal peptide. Residues 25-27 (GWL) form an HBEAG region. The disordered stretch occupies residues 165–212 (NAPILSTLPETTVVRRRGRSPRRRTPSPRRRRSQSPRRRRSQSRESQC). Over residues 178-205 (VRRRGRSPRRRTPSPRRRRSQSPRRRRS) the composition is skewed to basic residues. Residues 184–190 (SPRRRTP) form a 1; half-length repeat. Residues 184 to 206 (SPRRRTPSPRRRRSQSPRRRRSQ) form a 3 X 8 AA repeats of S-P-R-R-R-R-S-Q region. 2 tandem repeats follow at residues 191–198 (SPRRRRSQ) and 199–206 (SPRRRRSQ).

This sequence belongs to the orthohepadnavirus precore antigen family. Homodimerizes. Post-translationally, phosphorylated. In terms of processing, cleaved by host furin.

The protein resides in the secreted. The protein localises to the host nucleus. In terms of biological role, may regulate immune response to the intracellular capsid in acting as a T-cell tolerogen, by having an immunoregulatory effect which prevents destruction of infected cells by cytotoxic T-cells. This immune regulation may predispose to chronicity during perinatal infections and prevent severe liver injury during adult infections. This chain is External core antigen, found in Hepatitis B virus genotype C subtype ayr (isolate Human/Japan/Okamoto/-) (HBV-C).